A 478-amino-acid chain; its full sequence is Spindle defective protein 3 (478 aa).

At 1–24 the chain is on the cytoplasmic side; it reads MDQMTVEEKILEHQELEDGSSSFR. The chain crosses the membrane as a helical span at residues 25 to 45; that stretch reads WLVSSTVIAIGGATVALYISG. Residues 46–52 lie on the Extracellular side of the membrane; the sequence is KIDWKIP. A helical membrane pass occupies residues 53–73; the sequence is AIEAGLALTAGGTITCGYLWF. Residues 74–478 are Cytoplasmic-facing; sequence KKRVKTVRKL…LRRVDDDIIE (405 aa).

The protein localises to the mitochondrion. The protein resides in the mitochondrion outer membrane. In terms of biological role, in the first mitotic division in embryos, required for mitotic spindle alignment and asymmetric cell division. Required for motor-driven chromosome movement and homolog searching within the nucleus, and subsequently ensures homologous chromosome pairing during the prophase stage of meiosis. The protein is Spindle defective protein 3 of Caenorhabditis elegans.